A 381-amino-acid chain; its full sequence is tRNA (guanine(26)-N(2))-dimethyltransferase (381 aa).

The region spanning 7-378 (IEVQEGKAKI…APYEVFIETI (372 aa)) is the Trm1 methyltransferase domain. The S-adenosyl-L-methionine site is built by Arg-39, Arg-64, Asp-81, Asp-123, and Ala-124.

The protein belongs to the class I-like SAM-binding methyltransferase superfamily. Trm1 family.

The catalysed reaction is guanosine(26) in tRNA + 2 S-adenosyl-L-methionine = N(2)-dimethylguanosine(26) in tRNA + 2 S-adenosyl-L-homocysteine + 2 H(+). In terms of biological role, dimethylates a single guanine residue at position 26 of a number of tRNAs using S-adenosyl-L-methionine as donor of the methyl groups. In Pyrococcus horikoshii (strain ATCC 700860 / DSM 12428 / JCM 9974 / NBRC 100139 / OT-3), this protein is tRNA (guanine(26)-N(2))-dimethyltransferase.